We begin with the raw amino-acid sequence, 287 residues long: Phosphatidylserine decarboxylase proenzyme (287 aa).

Catalysis depends on charge relay system; for autoendoproteolytic cleavage activity residues D89, H146, and S252. The active-site Schiff-base intermediate with substrate; via pyruvic acid; for decarboxylase activity is the S252. Position 252 is a pyruvic acid (Ser); by autocatalysis (S252).

It belongs to the phosphatidylserine decarboxylase family. PSD-B subfamily. Prokaryotic type I sub-subfamily. Heterodimer of a large membrane-associated beta subunit and a small pyruvoyl-containing alpha subunit. It depends on pyruvate as a cofactor. Post-translationally, is synthesized initially as an inactive proenzyme. Formation of the active enzyme involves a self-maturation process in which the active site pyruvoyl group is generated from an internal serine residue via an autocatalytic post-translational modification. Two non-identical subunits are generated from the proenzyme in this reaction, and the pyruvate is formed at the N-terminus of the alpha chain, which is derived from the carboxyl end of the proenzyme. The autoendoproteolytic cleavage occurs by a canonical serine protease mechanism, in which the side chain hydroxyl group of the serine supplies its oxygen atom to form the C-terminus of the beta chain, while the remainder of the serine residue undergoes an oxidative deamination to produce ammonia and the pyruvoyl prosthetic group on the alpha chain. During this reaction, the Ser that is part of the protease active site of the proenzyme becomes the pyruvoyl prosthetic group, which constitutes an essential element of the active site of the mature decarboxylase.

It localises to the cell membrane. The catalysed reaction is a 1,2-diacyl-sn-glycero-3-phospho-L-serine + H(+) = a 1,2-diacyl-sn-glycero-3-phosphoethanolamine + CO2. The protein operates within phospholipid metabolism; phosphatidylethanolamine biosynthesis; phosphatidylethanolamine from CDP-diacylglycerol: step 2/2. Functionally, catalyzes the formation of phosphatidylethanolamine (PtdEtn) from phosphatidylserine (PtdSer). The chain is Phosphatidylserine decarboxylase proenzyme from Shewanella woodyi (strain ATCC 51908 / MS32).